The primary structure comprises 93 residues: Histone H2B (93 aa).

Low complexity predominate over residues Met-1 to Lys-12. Residues Met-1–Xaa-31 form a disordered region. 2 positions are modified to N6-acetyllysine: Lys-6 and Lys-13. The span at Lys-13–Lys-28 shows a compositional bias: basic residues. Phosphoserine is present on Ser-15. N6-acetyllysine occurs at positions 16 and 21.

The protein belongs to the histone H2B family. The nucleosome is a histone octamer containing two molecules each of H2A, H2B, H3 and H4 assembled in one H3-H4 heterotetramer and two H2A-H2B heterodimers. The octamer wraps approximately 147 bp of DNA. In terms of processing, monoubiquitination at the C-terminal Lys gives a specific tag for epigenetic transcriptional activation and is also prerequisite for histone H3 'Lys-4' and 'Lys-79' methylation. Phosphorylated on Ser-15 during apoptosis; which facilitates apoptotic chromatin condensation.

The protein localises to the nucleus. It localises to the chromosome. Its function is as follows. Core component of nucleosome. Nucleosomes wrap and compact DNA into chromatin, limiting DNA accessibility to the cellular machineries which require DNA as a template. Histones thereby play a central role in transcription regulation, DNA repair, DNA replication and chromosomal stability. DNA accessibility is regulated via a complex set of post-translational modifications of histones, also called histone code, and nucleosome remodeling. This is Histone H2B from Crocodylus niloticus (Nile crocodile).